Consider the following 315-residue polypeptide: Ribosomal RNA small subunit methyltransferase H (315 aa).

Residues 35–37 (GGH), Asp-55, Phe-79, Asp-101, and Gln-108 contribute to the S-adenosyl-L-methionine site.

Belongs to the methyltransferase superfamily. RsmH family.

Its subcellular location is the cytoplasm. The enzyme catalyses cytidine(1402) in 16S rRNA + S-adenosyl-L-methionine = N(4)-methylcytidine(1402) in 16S rRNA + S-adenosyl-L-homocysteine + H(+). Functionally, specifically methylates the N4 position of cytidine in position 1402 (C1402) of 16S rRNA. This chain is Ribosomal RNA small subunit methyltransferase H, found in Sodalis glossinidius (strain morsitans).